We begin with the raw amino-acid sequence, 215 residues long: Cytidylate kinase (215 aa).

10-18 lines the ATP pocket; that stretch reads GPAASGKGT.

Belongs to the cytidylate kinase family. Type 1 subfamily.

It localises to the cytoplasm. The enzyme catalyses CMP + ATP = CDP + ADP. It catalyses the reaction dCMP + ATP = dCDP + ADP. This is Cytidylate kinase from Bartonella henselae (strain ATCC 49882 / DSM 28221 / CCUG 30454 / Houston 1) (Rochalimaea henselae).